Reading from the N-terminus, the 335-residue chain is UPF0324 membrane protein gbs1193 (335 aa).

9 helical membrane-spanning segments follow: residues 20–42 (SWLL…IGII), 57–79 (IAFT…LNLM), 84–106 (VGIS…AYVL), 116–138 (IATL…TAPV), 151–173 (SVIF…FIGL), 210–232 (GATI…LSIY), 253–275 (VLYF…SLRI), 285–304 (FFIV…SKLI), and 311–333 (ILLG…AILG).

It belongs to the UPF0324 family.

Its subcellular location is the cell membrane. The sequence is that of UPF0324 membrane protein gbs1193 from Streptococcus agalactiae serotype III (strain NEM316).